Consider the following 109-residue polypeptide: Thiosulfate sulfurtransferase GlpE (109 aa).

The region spanning 16–104 is the Rhodanese domain; the sequence is REQGAVVVDI…WRSTYPAETA (89 aa). The active-site Cysteine persulfide intermediate is cysteine 64.

It belongs to the GlpE family.

It localises to the cytoplasm. It carries out the reaction thiosulfate + hydrogen cyanide = thiocyanate + sulfite + 2 H(+). The catalysed reaction is thiosulfate + [thioredoxin]-dithiol = [thioredoxin]-disulfide + hydrogen sulfide + sulfite + 2 H(+). Functionally, transferase that catalyzes the transfer of sulfur from thiosulfate to thiophilic acceptors such as cyanide or dithiols. May function in a CysM-independent thiosulfate assimilation pathway by catalyzing the conversion of thiosulfate to sulfite, which can then be used for L-cysteine biosynthesis. The polypeptide is Thiosulfate sulfurtransferase GlpE (Pseudomonas fluorescens (strain ATCC BAA-477 / NRRL B-23932 / Pf-5)).